Consider the following 367-residue polypeptide: UDP-N-acetylenolpyruvoylglucosamine reductase (367 aa).

The region spanning 29–205 (VGPVAQRVIT…LEVEFKLDAS (177 aa)) is the FAD-binding PCMH-type domain. R177 is a catalytic residue. S260 serves as the catalytic Proton donor. The active site involves E359.

Belongs to the MurB family. Requires FAD as cofactor.

The protein localises to the cytoplasm. The enzyme catalyses UDP-N-acetyl-alpha-D-muramate + NADP(+) = UDP-N-acetyl-3-O-(1-carboxyvinyl)-alpha-D-glucosamine + NADPH + H(+). Its pathway is cell wall biogenesis; peptidoglycan biosynthesis. Cell wall formation. The polypeptide is UDP-N-acetylenolpyruvoylglucosamine reductase (Mycobacterium leprae (strain Br4923)).